Here is a 2527-residue protein sequence, read N- to C-terminus: Leucine-rich repeat serine/threonine-protein kinase 2 (2527 aa).

The interval 1 to 969 (MASGACQGCE…RSSRLPSHMR (969 aa)) is required for RAB29-mediated activation. Residues 9-33 (CEEEEEEEALKKLIVRLNNVQEGKQ) adopt a coiled-coil conformation. 4 positions are modified to phosphoserine: Ser910, Ser935, Ser955, and Ser973. The segment at 957 to 979 (ESLRSSRLPSHMRQSDSSSSLAS) is disordered. Over residues 961–978 (SSRLPSHMRQSDSSSSLA) the composition is skewed to low complexity. LRR repeat units lie at residues 983–1004 (HITS…SQKC), 1012–1033 (HLTK…LCET), 1036–1057 (CLIH…VLKM), 1059–1080 (RITN…DPAM), 1084–1105 (SLKQ…LAQV), 1108–1129 (KLEQ…LSLK), 1130–1150 (ELKI…DFLE), 1156–1171 (ESFS…MPAL), 1174–1196 (SITS…FSLP), 1197–1218 (HLRS…AHWK), 1221–1245 (NLRE…HVWS), 1246–1267 (RVEK…IGCL), and 1269–1291 (NLTS…MGKL). Position 1292 is a phosphoserine; by autocatalysis (Ser1292). One can recognise a Roc domain in the interval 1328-1511 (KAVPYNRMKL…KTIINESLNF (184 aa)). 1341 to 1348 (GNTGSGKT) contacts GTP. Position 1444 is a phosphoserine (Ser1444). Residues 1543–1740 (TEFPVINRKH…RMYWRQGIYL (198 aa)) enclose the COR domain. The Protein kinase domain occupies 1879–2146 (EAPEFLLGDG…LICLMRHILI (268 aa)). ATP is bound by residues Leu1885, Asp1887, Gly1888, Gly1891, Val1893, Ala1904, Lys1906, Met1947, Glu1948, Ala1950, Ser1954, and Arg1957. Asp1994 functions as the Proton acceptor in the catalytic mechanism. The ATP site is built by His1998, Leu2001, Ala2016, and Asp2017. Position 2098-2121 (2098-2121 (EYGCAPWPMVEKLITKCLKENPQE)) interacts with GTP. 7 WD repeats span residues 2139–2183 (CLMR…SLFD), 2188–2228 (RYSY…LVIN), 2233–2276 (TKRH…MIFE), 2281–2327 (KCKG…FSFS), 2333–2377 (QKLI…EVWD), 2402–2438 (KESK…LLLD), and 2443–2497 (RVIR…SIWD). Residue 2295 to 2298 (DVST) coordinates GTP.

The protein belongs to the protein kinase superfamily. TKL Ser/Thr protein kinase family. As to quaternary structure, homodimer. Homotetramer; when activated by GTP-bound RAB29. Interacts with PRKN, PRDX3 and TPCN2. Interacts with VPS35. Interacts (via N-terminus) with RAB29; this interaction is direct and stimulates kinase activity. Interacts (via ROC domain) with SEC16A. Interacts with APP; interaction promotes phosphorylation of 'Thr-743' of APP. Interacts with MAPT. Interacts with RAB8A, RAB10, and RAB12. Interacts (via N-terminus) with RAB32. Interacts with YWHAG; this interaction is dependent on phosphorylation of Ser-910 and either Ser-935 or Ser-1444. Interacts with SFN; this interaction is dependent on phosphorylation of Ser-910 and/or Ser-935. It depends on Mg(2+) as a cofactor. Autophosphorylated at Ser-1292. Autophosphorylation is stimulated by RAB29. Phosphorylation of Ser-910 and Ser-935 or Ser-1444 facilitates interaction with YWHAG. Phosphorylation of Ser-910 and/or Ser-935 facilitates interaction with SFN. In terms of processing, ubiquitinated by TRIM1; undergoes 'Lys-48'-linked polyubiquitination leading to proteasomal degradation. As to expression, expressed in the brain (at protein level). Detected throughout the adult brain. Expressed in deep cerebral cortex layers, superficial cingulate cortex layers, the piriform cortex, hippocampal formation, caudate putamen, substantia nigra, the basolateral and basomedial anterior amygdala nuclei, reticular thalamic nucleus and also in the cerebellar granular cell layer. Highly expressed in the striatum, cortex and olfactory tubercle. Little or no expression in the substantia nigra, where dopaminergic neurons preferentially degenerate in Parkinson disease. Expression is particularly high in brain dopaminoceptive areas. High and strikingly specific expression in striatum and parts of cortex and no signals in dopamine neurons.

Its subcellular location is the cytoplasmic vesicle. It is found in the perikaryon. It localises to the cell projection. The protein localises to the axon. The protein resides in the dendrite. Its subcellular location is the golgi apparatus membrane. It is found in the endoplasmic reticulum membrane. It localises to the secretory vesicle. The protein localises to the synaptic vesicle membrane. The protein resides in the endosome. Its subcellular location is the lysosome. It is found in the mitochondrion outer membrane. It localises to the cytoplasm. The protein localises to the cytoskeleton. The protein resides in the phagosome. It catalyses the reaction L-threonyl-[protein] + ATP = O-phospho-L-threonyl-[protein] + ADP + H(+). The catalysed reaction is L-seryl-[protein] + ATP = O-phospho-L-seryl-[protein] + ADP + H(+). The enzyme catalyses GTP + H2O = GDP + phosphate + H(+). Kinase activity is regulated by the GTPase activity of the ROC domain. GTP-bound LRRK2 kinase activity is stimulated by RAB29. Phosphorylation of RAB10 'Thr-73' is stimulated by RAB29 and RAB32. Inhibited by small molecule inhibitors MLi-2 and LRRK2-IN-1. Serine/threonine-protein kinase which phosphorylates a broad range of proteins involved in multiple processes such as neuronal plasticity, innate immunity, autophagy, and vesicle trafficking. Is a key regulator of RAB GTPases by regulating the GTP/GDP exchange and interaction partners of RABs through phosphorylation. Phosphorylates RAB3A, RAB3B, RAB3C, RAB3D, RAB8A, RAB8B, RAB10, RAB12, RAB29, RAB35, and RAB43. Regulates the RAB3IP-catalyzed GDP/GTP exchange for RAB8A through the phosphorylation of 'Thr-72' on RAB8A. Inhibits the interaction between RAB8A and GDI1 and/or GDI2 by phosphorylating 'Thr-72' on RAB8A. Regulates primary ciliogenesis through phosphorylation of RAB8A and RAB10, which promotes SHH signaling in the brain. Together with RAB29, plays a role in the retrograde trafficking pathway for recycling proteins, such as mannose-6-phosphate receptor (M6PR), between lysosomes and the Golgi apparatus in a retromer-dependent manner. Regulates neuronal process morphology in the intact central nervous system (CNS). Plays an important role in recruiting SEC16A to endoplasmic reticulum exit sites (ERES) and in regulating ER to Golgi vesicle-mediated transport and ERES organization. Positively regulates autophagy through a calcium-dependent activation of the CaMKK/AMPK signaling pathway. The process involves activation of nicotinic acid adenine dinucleotide phosphate (NAADP) receptors, increase in lysosomal pH, and calcium release from lysosomes. Phosphorylates PRDX3. By phosphorylating APP on 'Thr-743', which promotes the production and the nuclear translocation of the APP intracellular domain (AICD), regulates dopaminergic neuron apoptosis. Acts as a positive regulator of innate immunity by mediating phosphorylation of RIPK2 downstream of NOD1 and NOD2, thereby enhancing RIPK2 activation. Independent of its kinase activity, inhibits the proteasomal degradation of MAPT, thus promoting MAPT oligomerization and secretion. In addition, has GTPase activity via its Roc domain which regulates LRKK2 kinase activity. Recruited by RAB29/RAB7L1 to overloaded lysosomes where it phosphorylates and stabilizes RAB8A and RAB10 which promote lysosomal content release and suppress lysosomal enlargement through the EHBP1 and EHBP1L1 effector proteins. The chain is Leucine-rich repeat serine/threonine-protein kinase 2 (Lrrk2) from Mus musculus (Mouse).